The primary structure comprises 283 residues: Nucleotide-binding protein IL0393 (283 aa).

8–15 is an ATP binding site; that stretch reads GRSGSGKT. 56–59 lines the GTP pocket; the sequence is DVRN.

Belongs to the RapZ-like family.

Displays ATPase and GTPase activities. This chain is Nucleotide-binding protein IL0393, found in Idiomarina loihiensis (strain ATCC BAA-735 / DSM 15497 / L2-TR).